A 179-amino-acid chain; its full sequence is O-acetyl-ADP-ribose deacetylase (179 aa).

Residues 1–175 enclose the Macro domain; sequence MTSRLQVIQG…LYARLLTQQG (175 aa). Substrate contacts are provided by residues 11-12, Asn-25, 33-35, and 122-126; these read DI, GVD, and STGVY. Asp-35 acts as the Proton acceptor in catalysis.

The protein belongs to the MacroD-type family. YmdB subfamily. Homodimer. Interacts with RNase III.

The enzyme catalyses 3''-O-acetyl-ADP-D-ribose + H2O = ADP-D-ribose + acetate + H(+). The catalysed reaction is 2''-O-acetyl-ADP-D-ribose + H2O = ADP-D-ribose + acetate + H(+). Its function is as follows. Deacetylates O-acetyl-ADP ribose to yield ADP-ribose and free acetate. Down-regulates ribonuclease 3 (RNase III) activity. Acts by interacting directly with the region of the ribonuclease that is required for dimerization/activation. This chain is O-acetyl-ADP-ribose deacetylase, found in Salmonella newport (strain SL254).